A 125-amino-acid chain; its full sequence is Small ribosomal subunit protein eS26 (125 aa).

It belongs to the eukaryotic ribosomal protein eS26 family.

In Sterkiella nova (Ciliate), this protein is Small ribosomal subunit protein eS26 (RPS26).